The sequence spans 167 residues: S-ribosylhomocysteine lyase (167 aa).

Fe cation is bound by residues H54, H58, and C128.

Belongs to the LuxS family. As to quaternary structure, homodimer. It depends on Fe cation as a cofactor.

It carries out the reaction S-(5-deoxy-D-ribos-5-yl)-L-homocysteine = (S)-4,5-dihydroxypentane-2,3-dione + L-homocysteine. Involved in the synthesis of autoinducer 2 (AI-2) which is secreted by bacteria and is used to communicate both the cell density and the metabolic potential of the environment. The regulation of gene expression in response to changes in cell density is called quorum sensing. Catalyzes the transformation of S-ribosylhomocysteine (RHC) to homocysteine (HC) and 4,5-dihydroxy-2,3-pentadione (DPD). The protein is S-ribosylhomocysteine lyase of Haemophilus influenzae (strain 86-028NP).